Here is a 202-residue protein sequence, read N- to C-terminus: Venom allergen 5.02 (202 aa).

4 cysteine pairs are disulfide-bonded: cysteine 4-cysteine 16, cysteine 8-cysteine 101, cysteine 26-cysteine 94, and cysteine 168-cysteine 185. Positions 46 to 187 (KQHNEFRQKV…WHRHYLVCNY (142 aa)) constitute an SCP domain.

This sequence belongs to the CRISP family. Venom allergen 5-like subfamily. As to expression, expressed by the venom gland.

The protein resides in the secreted. The chain is Venom allergen 5.02 from Vespa crabro (European hornet).